A 286-amino-acid chain; its full sequence is Dolichyl-diphosphooligosaccharide--protein glycosyltransferase subunit SWP1 (286 aa).

An N-terminal signal peptide occupies residues 1–19 (MQFFKTLAALVSCISFVLA). Over 20–194 (YVAQDVHVSF…HAEPKRVAKP (175 aa)) the chain is Lumenal. A helical membrane pass occupies residues 195 to 215 (IAVIFVLIIFITILSLIVTWL). The Cytoplasmic segment spans residues 216-228 (NSCAAAFNNIPTG). A helical transmembrane segment spans residues 229–249 (VTAVYFLGFIATIVGFEVIFA). Over 250-252 (RYY) the chain is Lumenal. A helical membrane pass occupies residues 253–273 (LGTSIFETLFSSLYLGAPGLL). The Cytoplasmic portion of the chain corresponds to 274 to 286 (TSTKFLRSFGQTI).

It belongs to the SWP1 family. In terms of assembly, component of the oligosaccharyltransferase (OST) complex, which appears to exist in two assemblies comprising OST1, OST2, OST4, OST5, STT3, SWP1, WPB1, and either OST3 or OST6. OST assembly occurs through the formation of 3 subcomplexes. Subcomplex 1 contains OST1 and OST5, subcomplex 2 contains STT3, OST3, and OST4, and subcomplex 3 contains OST2, WBP1, and SWP1. Interacts with SEC61 and SSS1.

It is found in the endoplasmic reticulum membrane. The protein operates within protein modification; protein glycosylation. Its function is as follows. Subunit of the oligosaccharyl transferase (OST) complex that catalyzes the initial transfer of a defined glycan (Glc(3)Man(9)GlcNAc(2) in eukaryotes) from the lipid carrier dolichol-pyrophosphate to an asparagine residue within an Asn-X-Ser/Thr consensus motif in nascent polypeptide chains, the first step in protein N-glycosylation. N-glycosylation occurs cotranslationally and the complex associates with the Sec61 complex at the channel-forming translocon complex that mediates protein translocation across the endoplasmic reticulum (ER). All subunits are required for a maximal enzyme activity. This Saccharomyces cerevisiae (strain ATCC 204508 / S288c) (Baker's yeast) protein is Dolichyl-diphosphooligosaccharide--protein glycosyltransferase subunit SWP1 (SWP1).